The following is a 196-amino-acid chain: Alpha-crystallin A chain (196 aa).

N-acetylmethionine is present on M1. Positions 1–63 (MDVTIQHPWF…RTVLDSGISE (63 aa)) are required for complex formation with BFSP1 and BFSP2. Q6 is modified (deamidated glutamine; partial). S45 is subject to Phosphoserine. The residue at position 50 (Q50) is a Deamidated glutamine; partial. The sHSP domain maps to 76–185 (HAGNPKNNPI…GHSERAIPVS (110 aa)). N6-acetyllysine occurs at positions 93 and 122. H123 contacts Zn(2+). N124 is modified (deamidated asparagine; partial). Residues E125 and H130 each contribute to the Zn(2+) site. S145 is subject to Phosphoserine. N146 is modified (deamidated asparagine; partial). The interval 168 to 196 (KVQSGLDAGHSERAIPVSREEKPSSAPSS) is disordered. Q170 carries the deamidated glutamine; partial modification. Positions 176–190 (GHSERAIPVSREEKP) are enriched in basic and acidic residues. H177 serves as a coordination point for Zn(2+). O-linked (GlcNAc) serine glycosylation is present at S185.

The protein belongs to the small heat shock protein (HSP20) family. In terms of assembly, heteromer composed of three CRYAA and one CRYAB subunits. Inter-subunit bridging via zinc ions enhances stability, which is crucial as there is no protein turn over in the lens. Can also form homodimers and homotetramers (dimers of dimers) which serve as the building blocks of homooligomers. Within homooligomers, the zinc-binding motif is created from residues of 3 different molecules. His-123 and Glu-125 from one molecule are ligands of the zinc ion, and His-130 and His-177 residues from additional molecules complete the site with tetrahedral coordination geometry. Part of a complex required for lens intermediate filament formation composed of BFSP1, BFSP2 and CRYAA. Post-translationally, acetylation at Lys-93 may increase chaperone activity. Undergoes age-dependent proteolytical cleavage at the C-terminus.

Its subcellular location is the cytoplasm. The protein localises to the nucleus. Contributes to the transparency and refractive index of the lens. Acts as a chaperone, preventing aggregation of various proteins under a wide range of stress conditions. Required for the correct formation of lens intermediate filaments as part of a complex composed of BFSP1, BFSP2 and CRYAA. In Mesocricetus auratus (Golden hamster), this protein is Alpha-crystallin A chain (CRYAA).